Consider the following 807-residue polypeptide: Serine/threonine-protein kinase AfsK (807 aa).

One can recognise a Protein kinase domain in the interval Phe16–Ala272. Residues Leu22–Val30 and Lys44 contribute to the ATP site. At Ser71 the chain carries Phosphoserine; by autocatalysis. The Proton acceptor role is filled by Asp138. Thr168 carries the phosphothreonine; by autocatalysis modification. Disordered regions lie at residues Met292 to Ala328 and Ala353 to Ala429. Positions Arg297–Arg315 are enriched in basic residues. Positions Ala353–Pro363 are enriched in low complexity.

The protein belongs to the protein kinase superfamily. Ser/Thr protein kinase family. In terms of assembly, interacts (via the N-terminal kinase domain) with KbpA; the interaction prevents autophosphorylation of AfsK. Autophosphorylated mainly on threonine residues. Some phosphorylation on serine residues. Autophosphorylation on Thr-168 is the major site enhancing kinase activity towards AfsR, and is regulated though interaction with KbpA.

The catalysed reaction is L-seryl-[protein] + ATP = O-phospho-L-seryl-[protein] + ADP + H(+). It catalyses the reaction L-threonyl-[protein] + ATP = O-phospho-L-threonyl-[protein] + ADP + H(+). Functionally, component of the AfsK/AfsR system involved in the response of aerial mycelium formation to glucose. The polypeptide is Serine/threonine-protein kinase AfsK (afsK) (Streptomyces griseus).